The following is a 481-amino-acid chain: G-protein coupled receptor 37-like 1 (481 aa).

The first 25 residues, 1-25 (MRWLWPLAVSLAVILAVGLSRVSGG), serve as a signal peptide directing secretion. Disordered stretches follow at residues 26–58 (APLH…GVQQ) and 70–108 (PIHP…NLTG). Over 26-134 (APLHLGRHRA…ESSYSAYAIM (109 aa)) the chain is Extracellular. O-linked (GalNAc...) threonine glycans are attached at residues threonine 79 and threonine 85. Serine 86 carries O-linked (GalNAc...) serine glycosylation. Residue threonine 95 is glycosylated (O-linked (GalNAc...) threonine). An N-linked (GlcNAc...) asparagine glycan is attached at asparagine 105. Residue threonine 107 is glycosylated (O-linked (GalNAc...) threonine). The chain crosses the membrane as a helical span at residues 135–155 (LLALVVFAVGIVGNLSVMCIV). Topologically, residues 156–167 (WHSYYLKSAWNS) are cytoplasmic. A helical transmembrane segment spans residues 168-188 (ILASLALWDFLVLFFCLPIVI). The Extracellular portion of the chain corresponds to 189-205 (FNEITKQRLLGDVSCRA). Cysteine 203 and cysteine 286 form a disulfide bridge. Residues 206–226 (VPFMEVSSLGVTTFSLCALGI) form a helical membrane-spanning segment. The Cytoplasmic portion of the chain corresponds to 227 to 251 (DRFHVATSTLPKVRPIERCQSILAK). Residues 252 to 272 (LAVIWVGSMTLAVPELLLWQL) form a helical membrane-spanning segment. The Extracellular segment spans residues 273 to 310 (AQEPAPTMGTLDSCIMKPSASLPESLYSLVMTYQNARM). A helical transmembrane segment spans residues 311–331 (WWYFGCYFCLPILFTVTCQLV). Residues 332–361 (TWRVRGPPGRKSECRASKHEQCESQLNSTV) are Cytoplasmic-facing. The chain crosses the membrane as a helical span at residues 362-382 (VGLTVVYAFCTLPENVCNIVV). Residues 383 to 398 (AYLSTELTRQTLDLLG) are Extracellular-facing. Residues 399 to 419 (LINQFSTFFKGAITPVLLLCI) traverse the membrane as a helical segment. Over 420–481 (CRPLGQAFLD…PPLLPLGTPC (62 aa)) the chain is Cytoplasmic. The residue at position 471 (serine 471) is a Phosphoserine. Residue threonine 479 is modified to Phosphothreonine.

The protein belongs to the G-protein coupled receptor 1 family. Interacts with the PTCH1 receptor. O-glycosylated. Post-translationally, undergoes metalloprotease-mediated cleavage which reduces its constitutive activity. In terms of processing, ubiquitinated. As to expression, expressed in primary cortical astrocytes (at protein level). Expressed in the central nervous system.

Its subcellular location is the cell membrane. The protein resides in the cell projection. It localises to the cilium membrane. G-protein coupled receptor. Has been shown to bind the neuroprotective and glioprotective factor prosaposin (PSAP), leading to endocytosis followed by an ERK phosphorylation cascade. However, other studies have shown that prosaposin does not increase activity. It has been suggested that GPR37L1 is a constitutively active receptor which signals through the guanine nucleotide-binding protein G(s) subunit alpha. Participates in the regulation of postnatal cerebellar development by modulating the Shh pathway. Regulates baseline blood pressure in females and protects against cardiovascular stress in males. Mediates inhibition of astrocyte glutamate transporters and reduction in neuronal N-methyl-D-aspartate receptor activity. In Homo sapiens (Human), this protein is G-protein coupled receptor 37-like 1 (GPR37L1).